We begin with the raw amino-acid sequence, 290 residues long: uncharacterized protein (290 aa).

Its subcellular location is the cell membrane. It is found in the membrane raft. This is an uncharacterized protein from Bacillus subtilis (strain 168).